Here is a 432-residue protein sequence, read N- to C-terminus: Ribosomal protein uS12 methylthiotransferase RimO (432 aa).

The 119-residue stretch at 4–122 folds into the MTTase N-terminal domain; it reads KTIDIITLGC…LLQDLGKAYH (119 aa). [4Fe-4S] cluster-binding residues include cysteine 13, cysteine 51, cysteine 85, cysteine 146, cysteine 150, and cysteine 153. The region spanning 132-363 is the Radical SAM core domain; the sequence is TTPKHYAYLK…MAIQQGISTE (232 aa). The 67-residue stretch at 366-432 folds into the TRAM domain; the sequence is ASKVGQKMKV…DEFDLFGEII (67 aa).

The protein belongs to the methylthiotransferase family. RimO subfamily. [4Fe-4S] cluster is required as a cofactor.

The protein resides in the cytoplasm. It catalyses the reaction L-aspartate(89)-[ribosomal protein uS12]-hydrogen + (sulfur carrier)-SH + AH2 + 2 S-adenosyl-L-methionine = 3-methylsulfanyl-L-aspartate(89)-[ribosomal protein uS12]-hydrogen + (sulfur carrier)-H + 5'-deoxyadenosine + L-methionine + A + S-adenosyl-L-homocysteine + 2 H(+). Its function is as follows. Catalyzes the methylthiolation of an aspartic acid residue of ribosomal protein uS12. This Bacteroides fragilis (strain ATCC 25285 / DSM 2151 / CCUG 4856 / JCM 11019 / LMG 10263 / NCTC 9343 / Onslow / VPI 2553 / EN-2) protein is Ribosomal protein uS12 methylthiotransferase RimO.